Reading from the N-terminus, the 90-residue chain is Acyl-CoA-binding protein homolog (90 aa).

One can recognise an ACB domain in the interval 3-89 (LQEQFDQAAS…VESLIASLGL (87 aa)). An acyl-CoA contacts are provided by residues R15, 30 to 34 (YALFK), K53, K57, and Y76.

Belongs to the ACBP family.

Functionally, binds medium- and long-chain acyl-CoA esters with very high affinity and may function as an intracellular carrier of acyl-CoA esters. The chain is Acyl-CoA-binding protein homolog from Manduca sexta (Tobacco hawkmoth).